Here is a 390-residue protein sequence, read N- to C-terminus: DNA polymerase IV (390 aa).

The UmuC domain maps to 6 to 187 (VMHVDLDAFF…LDIAVMPGIG (182 aa)). Mg(2+) contacts are provided by D10 and D105. E106 is a catalytic residue.

Belongs to the DNA polymerase type-Y family. In terms of assembly, monomer. Requires Mg(2+) as cofactor.

It is found in the cytoplasm. The catalysed reaction is DNA(n) + a 2'-deoxyribonucleoside 5'-triphosphate = DNA(n+1) + diphosphate. Its function is as follows. Poorly processive, error-prone DNA polymerase involved in untargeted mutagenesis. Copies undamaged DNA at stalled replication forks, which arise in vivo from mismatched or misaligned primer ends. These misaligned primers can be extended by PolIV. Exhibits no 3'-5' exonuclease (proofreading) activity. May be involved in translesional synthesis, in conjunction with the beta clamp from PolIII. This is DNA polymerase IV from Dehalococcoides mccartyi (strain CBDB1).